The chain runs to 120 residues: NAD(P)H-quinone oxidoreductase subunit 3 (120 aa).

Helical transmembrane passes span 10–30 (FLGF…TNLI), 64–84 (MFAL…PWAV), and 89–109 (LGLL…IALA).

The protein belongs to the complex I subunit 3 family. As to quaternary structure, NDH-1 can be composed of about 15 different subunits; different subcomplexes with different compositions have been identified which probably have different functions.

Its subcellular location is the cellular thylakoid membrane. It catalyses the reaction a plastoquinone + NADH + (n+1) H(+)(in) = a plastoquinol + NAD(+) + n H(+)(out). The catalysed reaction is a plastoquinone + NADPH + (n+1) H(+)(in) = a plastoquinol + NADP(+) + n H(+)(out). Its function is as follows. NDH-1 shuttles electrons from an unknown electron donor, via FMN and iron-sulfur (Fe-S) centers, to quinones in the respiratory and/or the photosynthetic chain. The immediate electron acceptor for the enzyme in this species is believed to be plastoquinone. Couples the redox reaction to proton translocation, and thus conserves the redox energy in a proton gradient. Cyanobacterial NDH-1 also plays a role in inorganic carbon-concentration. The polypeptide is NAD(P)H-quinone oxidoreductase subunit 3 (Prochlorococcus marinus (strain MIT 9312)).